We begin with the raw amino-acid sequence, 855 residues long: Homeobox-leucine zipper protein HOX33 (855 aa).

The interval Met-1–Ala-21 is disordered. A DNA-binding region (homeobox) is located at residues Asp-26–Lys-89. Positions Arg-84–Asn-126 form a coiled coil. Positions Asp-168 to Glu-390 constitute an START domain.

Belongs to the HD-ZIP homeobox family. Class III subfamily. In terms of tissue distribution, expressed in seedlings, roots, stems, leaf sheaths and blades and panicles.

Its subcellular location is the nucleus. Probable transcription factor. This chain is Homeobox-leucine zipper protein HOX33 (HOX33), found in Oryza sativa subsp. indica (Rice).